Consider the following 341-residue polypeptide: UDP-N-acetylenolpyruvoylglucosamine reductase (341 aa).

An FAD-binding PCMH-type domain is found at 13-185 (FGVEQSCLSM…TAVGLRLPKA (173 aa)). Arg161 is a catalytic residue. Ser231 acts as the Proton donor in catalysis. Glu327 is a catalytic residue.

Belongs to the MurB family. Requires FAD as cofactor.

It localises to the cytoplasm. It carries out the reaction UDP-N-acetyl-alpha-D-muramate + NADP(+) = UDP-N-acetyl-3-O-(1-carboxyvinyl)-alpha-D-glucosamine + NADPH + H(+). It functions in the pathway cell wall biogenesis; peptidoglycan biosynthesis. Its function is as follows. Cell wall formation. The chain is UDP-N-acetylenolpyruvoylglucosamine reductase from Shewanella sp. (strain MR-4).